Consider the following 372-residue polypeptide: Protein phosphatase Mn(2+)-dependent 1K (372 aa).

Residues Met1–Gln29 constitute a mitochondrion transit peptide. The disordered stretch occupies residues Val34 to Ser55. The interval Arg46–Trp61 is critical for association with the BCKDH complex. A PPM-type phosphatase domain is found at Asn94 to Phe346. The Mn(2+) site is built by Asp127 and Gly128. Position 248 is a phosphoserine (Ser248). Asp298 and Asp337 together coordinate Mn(2+).

The protein belongs to the PP2C family. Monomer. Interacts with E1 and E2 components of the branched-chain alpha-ketoacid dehydrogenase (BCKDH) complex; this interaction requires colocalization in mitochondria. Interacts with BCKDHA but not with BCKDHB of the E1 component. Interacts with the 24-meric E2 core composed of DBT monomers with a 24:1 stoichiometry; the N-terminal region (residues 49-61) of PPM1K and C-terminal linker of the lipoyl domain of DBT (residues 145-160) are critical for this interaction, whereas the lipoyl prosthetic group is dispensable. Competes with BCKDK for binding to the E2 core; this interaction is modulated by branched-chain alpha-keto acids. At steady state, BCKDH holoenzyme preferentially binds BCKDK and BCKDHA is phosphorylated. In response to high levels of branched-chain alpha-keto acids, the inhibitory BCKDK is replaced by activating PPM1K leading to BCKDHA dephosphorylation and BCAA degradation. It depends on Mn(2+) as a cofactor.

The protein localises to the mitochondrion matrix. It catalyses the reaction O-phospho-L-seryl-[3-methyl-2-oxobutanoate dehydrogenase] + H2O = L-seryl-[3-methyl-2-oxobutanoate dehydrogenase] + phosphate. The catalysed reaction is O-phospho-L-seryl-[protein] + H2O = L-seryl-[protein] + phosphate. It participates in protein modification. Its activity is regulated as follows. Up-regulated upon interaction with the 24-meric DBT/E2 core of the BCKDH complex. Inhibited by Mg(2+) and Ca(2+) ions likely by competing with Mn(2+) ions for binding to the same metal-binding sites. Its function is as follows. Serine/threonine-protein phosphatase component of macronutrients metabolism. Forms a functional kinase and phosphatase pair with BCKDK, serving as a metabolic regulatory node that coordinates branched-chain amino acids (BCAAs) with glucose and lipid metabolism via two distinct phosphoprotein targets: mitochondrial BCKDHA subunit of the branched-chain alpha-ketoacid dehydrogenase (BCKDH) complex and cytosolic ACLY, a lipogenic enzyme of Krebs cycle. At high levels of branched-chain ketoacids, dephosphorylates and activates mitochondrial BCKDH complex, a multisubunit complex consisting of three multimeric components each involved in different steps of BCAA catabolism: E1 composed of BCKDHA and BCKDHB, E2 core composed of DBT monomers, and E3 composed of DLD monomers. Tightly associates with the E2 component of BCKDH complex and dephosphorylates BCKDHA on Ser-337. Regulates the reversible phosphorylation of ACLY in response to changes in cellular carbohydrate abundance such as occurs during fasting to feeding metabolic transition. At fasting state, appears to dephosphorylate ACLY on Ser-455 and inactivate it. Refeeding stimulates MLXIPL/ChREBP transcription factor, leading to increased BCKDK to PPM1K expression ratio, phosphorylation and activation of ACLY that ultimately results in the generation of malonyl-CoA and oxaloacetate immediate substrates of de novo lipogenesis and gluconeogenesis, respectively. Recognizes phosphosites having SxS or RxxS motifs and strictly depends on Mn(2+) ions for the phosphatase activity. Regulates Ca(2+)-induced opening of mitochondrial transition pore and apoptotic cell death. This Homo sapiens (Human) protein is Protein phosphatase Mn(2+)-dependent 1K.